We begin with the raw amino-acid sequence, 255 residues long: Zinc import ATP-binding protein ZnuC 1 (255 aa).

In terms of domain architecture, ABC transporter spans Ile7 to Gln220. Residue Gly39–Ser46 coordinates ATP. Positions His229–Ala255 are disordered.

It belongs to the ABC transporter superfamily. Zinc importer (TC 3.A.1.15.5) family. The complex is composed of two ATP-binding proteins (ZnuC), two transmembrane proteins (ZnuB) and a solute-binding protein (ZnuA).

It localises to the cell inner membrane. It catalyses the reaction Zn(2+)(out) + ATP(in) + H2O(in) = Zn(2+)(in) + ADP(in) + phosphate(in) + H(+)(in). Part of the ABC transporter complex ZnuABC involved in zinc import. Responsible for energy coupling to the transport system. This is Zinc import ATP-binding protein ZnuC 1 from Hahella chejuensis (strain KCTC 2396).